Consider the following 151-residue polypeptide: Deoxyuridine 5'-triphosphate nucleotidohydrolase (151 aa).

Substrate-binding positions include 70–72 (RSG), Asn83, 87–89 (LID), and Met97.

This sequence belongs to the dUTPase family. Mg(2+) serves as cofactor.

The enzyme catalyses dUTP + H2O = dUMP + diphosphate + H(+). Its pathway is pyrimidine metabolism; dUMP biosynthesis; dUMP from dCTP (dUTP route): step 2/2. In terms of biological role, this enzyme is involved in nucleotide metabolism: it produces dUMP, the immediate precursor of thymidine nucleotides and it decreases the intracellular concentration of dUTP so that uracil cannot be incorporated into DNA. This Actinobacillus pleuropneumoniae serotype 5b (strain L20) protein is Deoxyuridine 5'-triphosphate nucleotidohydrolase.